The chain runs to 141 residues: Large ribosomal subunit protein uL11 (141 aa).

Belongs to the universal ribosomal protein uL11 family. Part of the ribosomal stalk of the 50S ribosomal subunit. Interacts with L10 and the large rRNA to form the base of the stalk. L10 forms an elongated spine to which L12 dimers bind in a sequential fashion forming a multimeric L10(L12)X complex. Post-translationally, one or more lysine residues are methylated.

Forms part of the ribosomal stalk which helps the ribosome interact with GTP-bound translation factors. The sequence is that of Large ribosomal subunit protein uL11 from Desulfotalea psychrophila (strain LSv54 / DSM 12343).